We begin with the raw amino-acid sequence, 630 residues long: 1-deoxy-D-xylulose-5-phosphate synthase (630 aa).

Residues His-72 and 113–115 (GHS) each bind thiamine diphosphate. A Mg(2+)-binding site is contributed by Asp-144. Residues 145–146 (GA), Asn-173, Tyr-284, and Glu-367 each bind thiamine diphosphate. Mg(2+) is bound at residue Asn-173.

Belongs to the transketolase family. DXPS subfamily. Homodimer. It depends on Mg(2+) as a cofactor. The cofactor is thiamine diphosphate.

The enzyme catalyses D-glyceraldehyde 3-phosphate + pyruvate + H(+) = 1-deoxy-D-xylulose 5-phosphate + CO2. It participates in metabolic intermediate biosynthesis; 1-deoxy-D-xylulose 5-phosphate biosynthesis; 1-deoxy-D-xylulose 5-phosphate from D-glyceraldehyde 3-phosphate and pyruvate: step 1/1. Its function is as follows. Catalyzes the acyloin condensation reaction between C atoms 2 and 3 of pyruvate and glyceraldehyde 3-phosphate to yield 1-deoxy-D-xylulose-5-phosphate (DXP). This chain is 1-deoxy-D-xylulose-5-phosphate synthase, found in Bacillus cereus (strain G9842).